The following is a 1162-amino-acid chain: MVAIADARYETSSENSLIDTVAKYSVDDGETWETQIAIKNSRVSSVSRVVDPTVIVKGNKLYVLVGSYYSSRSYWSSHGDARDWDILLAVGEVTKSTAGGKITASIKWGSPVSLKKFFPAEMEGMHTNQFLGGAGVAIVASNGNLVYPVQVTNKRKQVFSKIFYSEDDGKTWKFGKGRSDFGCSEPVALEWEGKLIINTRVDWKRRLVYESSDMEKPWVEAVGTVSRVWGPSPKSNQPGSQTSFTAVTIEGMRVMLFTHPLNFKGRCVRDRLNLWLTDNQRIYNVGQVSIGDENSAYSSVLYKDDKLYCLHEINTDEVYSLVFARLVGELRIIKSVLRSWKNWTATCPAFAPLLIQPLRRQRVVVVPLSPRLVLLAFCRQRLPKRMGGSYRCVNASTANAERVRNGLKFAGVGGGALWPVSQQGQNQRYRFANHAFTLVASVTIHEAPRAASPLLGASLDSSGGKKLLGLSYDEKHQWQPIYGSTPVTPTGSWETGKRYHLVLTMANKIGSVYIDGELLEGSGQTVVPDGRTPDISHFYVGGYKRSDMPTISHVTVNNVLLYNRRQLNTEEIRTLFLSQDLIGTEAHMDSSSDSSAHSTPSTPADSSAHSTPSTPVDSSAHSTPSTPADSSAHGTPSTPVDSSAHGTPSTPADSSAHGTPSTPVDSSAHSTPSTPVDSSAHSTPSTPVDSSAHGAPSTPADSSAHGTPSTPVDSSAHGTPSTPADSSAHSTPSTPADSSAHSTPSTPADSSAHSTPSTPVDSSAHGTPSTPADSSAHSTPSTPADSSAHGTPSTPVDSSAHSTPSTPVDSSAHGTPSTPVDSSAHSTPSTPVDSSAHGTPSTPVDSSAHSTPSTPADSSAHSTPSTPADSSAHGTPSTPVDSSAHSTPSTPADSSAHSTPSTPVDSSAHSTPSTPADSSAHGTPSTPVDSSAHGTPSTPADSSAHSTPSTPADSSAHSTPSTPADSSAHSTPSTPVDSSAHSTPSTPADSSAHSTPSTPADSSAHSTPSTPADSSAHSTPSTPVDSSAHSTPSTPADSSAHGTPSTPADSSAHSTPSTPVDSSAHSTPSTPADSSAHGTPSTPADSSAHSTPSTPADSSAHGTPSTPADSSAHSTPSTPAGSSANGTVLILPDGAALSTFSGGGLLLCACALLLHVFFMAVF.

BNR repeat units lie at residues 23–34 (KYSVDDGETWET), 163–174 (FYSEDDGKTWKF), and 209–220 (YESSDMEKPWVE). Residues Asn342 and Asn394 are each glycosylated (N-linked (GlcNAc...) asparagine). Residues 587 to 1123 (HMDSSSDSSA…STPSTPAGSS (537 aa)) form a disordered region. The segment covering 589–615 (DSSSDSSAHSTPSTPADSSAHSTPSTP) has biased composition (low complexity). Residues 589 to 1120 (DSSSDSSAHS…SAHSTPSTPA (532 aa)) form a 44 X 12 AA tandem repeats, LTR domain region. Composition is skewed to polar residues over residues 616–689 (VDSS…TPVD) and 699–1123 (PADS…AGSS). Asn1125 is a glycosylation site (N-linked (GlcNAc...) asparagine).

It belongs to the glycosyl hydrolase 33 family.

The protein resides in the cell membrane. The enzyme catalyses Hydrolysis of alpha-(2-&gt;3)-, alpha-(2-&gt;6)-, alpha-(2-&gt;8)- glycosidic linkages of terminal sialic acid residues in oligosaccharides, glycoproteins, glycolipids, colominic acid and synthetic substrates.. Developmentally regulated neuraminidase implicated in parasite invasion of cells. The chain is Sialidase (TCNA) from Trypanosoma cruzi.